The sequence spans 246 residues: Bacteriorhodopsin-II-like protein (246 aa).

Helical transmembrane passes span 7–27, 45–65, 82–102, 107–127, 135–155, 182–202, and 205–225; these read EATW…YFAV, TLIP…LGVI, YADW…VAGA, LYKL…GSMM, IVWW…LLGE, WALY…IIAV, and EIML…AVLL. Position 217 is an N6-(retinylidene)lysine (Lys217).

Belongs to the archaeal/bacterial/fungal opsin family. In terms of processing, the covalent binding of retinal to the apoprotein, bacterioopsin, generates bacteriorhodopsin.

It is found in the cell membrane. Its function is as follows. Has no proton-pumping activity but is potentially capable of functioning as a sensory SRII-like protein. The chromophore contains 36.5% all-trans-, 7.6% 11-cis- and 56.4% 13-cis-retinal in the dark and 30.1% 11-cis- and 47.7% 13-cis-retinal upon illumination with &gt;460 nm light. This chain is Bacteriorhodopsin-II-like protein (bop2), found in Haloquadratum walsbyi (strain DSM 16790 / HBSQ001).